A 333-amino-acid chain; its full sequence is Homeobox protein engrailed-1 (333 aa).

Residues Met-1 to Ala-14 show a composition bias toward basic and acidic residues. 2 disordered regions span residues Met-1–Tyr-184 and Arg-226–Pro-247. The span at Ala-20–Asp-31 shows a compositional bias: gly residues. The span at Ser-38 to Arg-66 shows a compositional bias: pro residues. A compositionally biased stretch (gly residues) spans Thr-94 to Gly-104. A compositionally biased stretch (low complexity) spans Asp-144–Gln-173. Residues Asp-244–Thr-303 constitute a DNA-binding region (homeobox).

This sequence belongs to the engrailed homeobox family.

It localises to the nucleus. Functionally, required for proper formation of the apical ectodermal ridge and correct dorsal-ventral patterning in the limb. The chain is Homeobox protein engrailed-1 (EN1) from Gallus gallus (Chicken).